The primary structure comprises 1310 residues: Multidrug resistance protein 4 (1310 aa).

Transmembrane regions (helical) follow at residues 48–68, 125–145, 196–216, 223–243, and 299–319; these read WLDLILLAVGIFGSIGCGVLT, MVCFAIGSGVGSFLMTFCFFV, KFGIIFQTTTSFIAGYAIGFA, LVIMSMSPFIVLSMTLLAVFA, and GLTVGLGLGAVMFFIMGAFSL. Residues 55–368 enclose the ABC transmembrane type-1 1 domain; it reads AVGIFGSIGC…IAIPLNIFAT (314 aa). N-linked (GlcNAc...) asparagine glycosylation occurs at asparagine 336. The helical transmembrane segment at 342–362 threads the bilayer; it reads VMIVFICVLIATQGLSIIAIP. A glycan (N-linked (GlcNAc...) asparagine) is linked at asparagine 402. One can recognise an ABC transporter 1 domain in the interval 403 to 642; sequence ITLEDVQFRY…KGTYYGLVKR (240 aa). Position 438–445 (438–445) interacts with ATP; the sequence is GASGCGKS. A glycan (N-linked (GlcNAc...) asparagine) is linked at asparagine 608. A run of 2 helical transmembrane segments spans residues 721–741 and 773–793; these read WFLSTFGFIGGIGGGAIFPFF and IIVVVIGVASFLSFFMYIGLF. Residues 722-1030 form the ABC transmembrane type-1 2 domain; that stretch reads FLSTFGFIGG…LGNIVPDIGK (309 aa). N-linked (GlcNAc...) asparagine glycosylation is present at asparagine 816. A run of 3 helical transmembrane segments spans residues 849-869, 871-891, and 945-965; these read VGNVIHIISTIGFALGIAFYY, WKVSLAVMAVSPVLIVVVFIN, and IGIYKWAPLLSIFMCLTTLLT. Residues 1065–1304 form the ABC transporter 2 domain; it reads IEFKDICFRY…KGFYYTLAMQ (240 aa). An ATP-binding site is contributed by 1100-1107; it reads GASGCGKS.

The protein belongs to the ABC transporter superfamily. ABCB family. Multidrug resistance exporter (TC 3.A.1.201) subfamily.

Its subcellular location is the membrane. It carries out the reaction ATP + H2O + xenobioticSide 1 = ADP + phosphate + xenobioticSide 2.. Its function is as follows. Energy-dependent efflux pump responsible for decreased drug accumulation in multidrug resistance parasites. The chain is Multidrug resistance protein 4 from Entamoeba histolytica (strain ATCC 30459 / HM-1:IMSS / ABRM).